Consider the following 144-residue polypeptide: Giant hemoglobins B chain (144 aa).

The Globin domain occupies 3 to 144 (VCGPLQRLKV…LNVITNGIQG (142 aa)). Residue His-96 coordinates heme b.

This sequence belongs to the globin family. As to quaternary structure, part of giant hemoglobin C1, V1 and V2. This worm has three different extracellular Hbs: two dissolved in the vascular blood, V1 (CA. 3,500 kDa) and V2 (CA. 400 kDa), and one in the coelomic fluid, C1 (CA. 400 kDa). V1 consists of four heme-containing, globin chains (B-E) and four linker chains (L1-L4). V2 consists of six globin chains (A-F) and C1 consists of five globin chains (A-E).

The protein localises to the secreted. It localises to the extracellular space. The polypeptide is Giant hemoglobins B chain (Riftia pachyptila (Vent tube worm)).